Reading from the N-terminus, the 112-residue chain is ATP synthase subunit c (112 aa).

Helical transmembrane passes span Phe36–Met56 and Met81–Ile101.

It belongs to the ATPase C chain family. F-type ATPases have 2 components, F(1) - the catalytic core - and F(0) - the membrane proton channel. F(1) has five subunits: alpha(3), beta(3), gamma(1), delta(1), epsilon(1). F(0) has three main subunits: a(1), b(2) and c(10-14). The alpha and beta chains form an alternating ring which encloses part of the gamma chain. F(1) is attached to F(0) by a central stalk formed by the gamma and epsilon chains, while a peripheral stalk is formed by the delta and b chains.

It is found in the cell inner membrane. Functionally, f(1)F(0) ATP synthase produces ATP from ADP in the presence of a proton or sodium gradient. F-type ATPases consist of two structural domains, F(1) containing the extramembraneous catalytic core and F(0) containing the membrane proton channel, linked together by a central stalk and a peripheral stalk. During catalysis, ATP synthesis in the catalytic domain of F(1) is coupled via a rotary mechanism of the central stalk subunits to proton translocation. Key component of the F(0) channel; it plays a direct role in translocation across the membrane. A homomeric c-ring of between 10-14 subunits forms the central stalk rotor element with the F(1) delta and epsilon subunits. In Campylobacter jejuni subsp. jejuni serotype O:6 (strain 81116 / NCTC 11828), this protein is ATP synthase subunit c.